The following is a 763-amino-acid chain: Glycerophosphodiester phosphodiesterase GDPDL1 (763 aa).

The N-terminal stretch at 1–35 (MNSRPSNPTKLVIRSSTLLFCGVVLIHLFAAQIDA) is a signal peptide. Residues 36–744 (QRSTSRWQTL…STIAQAPSGQ (709 aa)) lie on the Extracellular side of the membrane. Residues 50–350 (PLVIARGGFS…DFPITASAAV (301 aa)) enclose the GP-PDE 1 domain. N-linked (GlcNAc...) asparagine glycosylation is found at Asn105, Asn192, Asn248, Asn257, Asn315, Asn359, Asn430, Asn534, Asn547, and Asn654. The 303-residue stretch at 366-668 (FLVISKDGAS…EFPFTAARYK (303 aa)) folds into the GP-PDE 2 domain. A helical membrane pass occupies residues 745–762 (TRLKLSLLLSVFFLSLLL). Leu763 is a topological domain (cytoplasmic).

Belongs to the glycerophosphoryl diester phosphodiesterase family. It depends on Ca(2+) as a cofactor. Expressed in rosette and cauline leaves, stems, flowers and siliques.

The protein localises to the cell membrane. It catalyses the reaction a sn-glycero-3-phosphodiester + H2O = an alcohol + sn-glycerol 3-phosphate + H(+). Its function is as follows. Hydrolyzes glycerolphosphoglycerol, glycerophosphocholine and glycerophosphoethanolamine in vitro. This Arabidopsis thaliana (Mouse-ear cress) protein is Glycerophosphodiester phosphodiesterase GDPDL1.